The sequence spans 431 residues: MATCLRGITKRVNLLQRRVYPSCGHLIRDDRDETKSGSSDTMIREVLARNGTNKLSSMFADRHYQSFATGPLGLGLSSCRHMSSTPPEWSDKVDGIDFVATEVVPDEIIEAVTTTSQAVVPAINEVAIAAADSAFPVAALQHLIDAVHSFTGLNWWASIALTTVLIRGVTIPILLNQLKATYKLNVLRPQLEELRQEMSTKAQDPEAMAEGQRRMQLLFKEHGVTPFTPLKGLIIQGPIFISFFFAIRNMAEKVPSFKTGGTLWFTDLTTTDTTYILPLLTAVTFLIMVESNMQEGLEGNPVAGTMKKFSRIIAFLSIPVLIGIEKALFCYWLTSNLFTLVYGLTLRRPDVRKLLNLPDVVNSSTRQPSPSSPLPFSFAEPKDQSVVAQEKPPMSSESSSSVPDRRISRSSVLNQRIRTLERQLKDRKIKK.

A mitochondrion-targeting transit peptide spans 1–22; it reads MATCLRGITKRVNLLQRRVYPS. The next 5 membrane-spanning stretches (helical) occupy residues 119–139, 155–175, 227–247, 269–289, and 312–332; these read VVPA…PVAA, WWAS…PILL, FTPL…FFAI, TTTD…LIMV, and IIAF…FCYW. Residues 362–414 form a disordered region; the sequence is NSSTRQPSPSSPLPFSFAEPKDQSVVAQEKPPMSSESSSSVPDRRISRSSVLN. Residues 392 to 402 are compositionally biased toward low complexity; it reads PPMSSESSSSV.

This sequence belongs to the OXA1/ALB3/YidC (TC 2.A.9.2) family.

It localises to the mitochondrion inner membrane. In terms of biological role, probably required for the insertion of integral membrane proteins into the mitochondrial inner membrane. May participate in the activity and assembly of cytochrome oxidase. This chain is Mitochondrial inner membrane protein OXA1-like (OXA1L), found in Arabidopsis thaliana (Mouse-ear cress).